The primary structure comprises 163 residues: Cytochrome c-type biogenesis protein CcmE (163 aa).

At 1-8 the chain is on the cytoplasmic side; sequence MNPRRKKR. The helical; Signal-anchor for type II membrane protein transmembrane segment at 9 to 29 threads the bilayer; the sequence is LTIILAISAGLAAVIGLVLYA. The Periplasmic portion of the chain corresponds to 30 to 163; it reads LSQNIDLFYT…TEAQLKGAKQ (134 aa). The heme site is built by His-131 and Tyr-135.

Belongs to the CcmE/CycJ family.

The protein localises to the cell inner membrane. Functionally, heme chaperone required for the biogenesis of c-type cytochromes. Transiently binds heme delivered by CcmC and transfers the heme to apo-cytochromes in a process facilitated by CcmF and CcmH. The protein is Cytochrome c-type biogenesis protein CcmE of Aeromonas salmonicida (strain A449).